Here is a 154-residue protein sequence, read N- to C-terminus: Spermatogenesis-associated protein 19, mitochondrial (154 aa).

A mitochondrion-targeting transit peptide spans 1-24 (MIITTWIVYILARKGAGLPFPPKV). Phosphoserine is present on residues S26 and S116.

It is found in the mitochondrion outer membrane. The protein localises to the mitochondrion. It localises to the cell projection. Its subcellular location is the cilium. The protein resides in the flagellum. In terms of biological role, essential for sperm motility and male fertility. Plays an important role in sperm motility by regulating the organization and function of the mitochondria and is also required for correct sperm midpiece assembly. This chain is Spermatogenesis-associated protein 19, mitochondrial (SPATA19), found in Bos taurus (Bovine).